A 463-amino-acid polypeptide reads, in one-letter code: Probable Xaa-Pro aminopeptidase pepP (463 aa).

Mn(2+) contacts are provided by Asp-259, Asp-270, Glu-393, and Glu-433.

It belongs to the peptidase M24B family. The cofactor is Mn(2+).

The catalysed reaction is Release of any N-terminal amino acid, including proline, that is linked to proline, even from a dipeptide or tripeptide.. Its function is as follows. Catalyzes the removal of a penultimate prolyl residue from the N-termini of peptides. The polypeptide is Probable Xaa-Pro aminopeptidase pepP (pepP) (Pyrenophora tritici-repentis (strain Pt-1C-BFP) (Wheat tan spot fungus)).